Reading from the N-terminus, the 1179-residue chain is Integrin alpha-E (1179 aa).

Residues 1–18 form the signal peptide; that stretch reads MWLFHTLLCIASLALLAA. Residues 19–1124 are Extracellular-facing; it reads FNVDVARPWL…VFLKDEKYHS (1106 aa). FG-GAP repeat units lie at residues 22-79 and 80-138; these read DVAR…EILC and HPVE…PQAQ. Asparagine 49 is a glycosylation site (N-linked (GlcNAc...) asparagine). Intrachain disulfides connect cysteine 70–cysteine 79 and cysteine 126–cysteine 159. The X-domain (extra domain) stretch occupies residues 145–199; the sequence is ENLLDPDARVDTGDCYSNKEGGGEDDVNTARQRRALEKEEEEDKEEEEDEEEEEA. Positions 158-200 are disordered; that stretch reads DCYSNKEGGGEDDVNTARQRRALEKEEEEDKEEEEDEEEEEAG. The span at 182-200 shows a compositional bias: acidic residues; it reads KEEEEDKEEEEDEEEEEAG. The region spanning 200–389 is the VWFA domain; it reads GTEIAIILDG…SKLRYNIISM (190 aa). 2 N-linked (GlcNAc...) asparagine glycosylation sites follow: asparagine 271 and asparagine 321. One copy of the FG-GAP 3 repeat lies at 390-442; sequence EGTVGDALHYQLAQIGFSAQILDERQVLLGAVGAFDWSGGALLYDTRSRRGRF. Asparagine 444 carries N-linked (GlcNAc...) asparagine glycosylation. FG-GAP repeat units lie at residues 447 to 499, 500 to 560, 563 to 627, and 631 to 691; these read AAAA…GREA, SFLP…DGSF, ARIL…GLSA, and QRIR…FTPS. Ca(2+)-binding residues include aspartate 522, aspartate 524, aspartate 526, aspartate 530, aspartate 586, serine 588, aspartate 590, aspartate 594, aspartate 654, serine 656, aspartate 658, and aspartate 662. Cysteine 706 and cysteine 762 are oxidised to a cystine. 2 N-linked (GlcNAc...) asparagine glycosylation sites follow: asparagine 726 and asparagine 782. The cysteines at positions 823 and 829 are disulfide-linked. An N-linked (GlcNAc...) asparagine glycan is attached at asparagine 857. Cysteine 893 and cysteine 907 form a disulfide bridge. Asparagine 934 and asparagine 954 each carry an N-linked (GlcNAc...) asparagine glycan. 2 cysteine pairs are disulfide-bonded: cysteine 1008–cysteine 1033 and cysteine 1041–cysteine 1057. N-linked (GlcNAc...) asparagine glycans are attached at residues asparagine 1065 and asparagine 1096. Residues 1125 to 1147 form a helical membrane-spanning segment; sequence LPIIIKGSVGGLLVLIVILVILF. Over 1148-1179 the chain is Cytoplasmic; the sequence is KCGFFKRKYQQLNLESIRKAQLKSENLLEEEN. Positions 1150–1154 match the GFFKR motif motif; that stretch reads GFFKR.

This sequence belongs to the integrin alpha chain family. Heterodimer of an alpha and a beta subunit. The alpha subunit is composed of a heavy and a light chains linked by a disulfide bond. Alpha-E associates with beta-7. In terms of tissue distribution, expressed on a subclass of T-lymphocytes known as intra-epithelial lymphocytes which are located between mucosal epithelial cells.

It localises to the membrane. Integrin alpha-E/beta-7 is a receptor for E-cadherin. It mediates adhesion of intra-epithelial T-lymphocytes to epithelial cell monolayers. This chain is Integrin alpha-E (ITGAE), found in Homo sapiens (Human).